The chain runs to 395 residues: Chorismate synthase (395 aa).

NADP(+) is bound by residues R40 and R46. The segment at 98–120 (LPREGRNAPLSRPRPGHADLTGM) is disordered. Residues 134-136 (RSS), 256-257 (QA), G301, 316-320 (KPIPS), and R342 each bind FMN.

It belongs to the chorismate synthase family. In terms of assembly, homotetramer. Requires FMNH2 as cofactor.

The catalysed reaction is 5-O-(1-carboxyvinyl)-3-phosphoshikimate = chorismate + phosphate. The protein operates within metabolic intermediate biosynthesis; chorismate biosynthesis; chorismate from D-erythrose 4-phosphate and phosphoenolpyruvate: step 7/7. Functionally, catalyzes the anti-1,4-elimination of the C-3 phosphate and the C-6 proR hydrogen from 5-enolpyruvylshikimate-3-phosphate (EPSP) to yield chorismate, which is the branch point compound that serves as the starting substrate for the three terminal pathways of aromatic amino acid biosynthesis. This reaction introduces a second double bond into the aromatic ring system. The chain is Chorismate synthase from Bifidobacterium longum subsp. infantis (strain ATCC 15697 / DSM 20088 / JCM 1222 / NCTC 11817 / S12).